Consider the following 388-residue polypeptide: Na(+)/H(+) antiporter NhaA (388 aa).

11 consecutive transmembrane segments (helical) span residues 14–34 (GGII…SGFT), 59–79 (MLLW…GLEV), 95–115 (AFPV…YLAF), 125–145 (GWAI…ALLG), 154–174 (IFLM…IALF), 179–199 (LSMV…VLNL), 219–239 (VLKS…FIPL), 254–274 (VLHP…NAGV), 287–307 (ILPL…ISLF), 328–348 (IMAV…IASL), and 356–376 (ALIN…AVIG).

The protein belongs to the NhaA Na(+)/H(+) (TC 2.A.33) antiporter family.

It localises to the cell inner membrane. It catalyses the reaction Na(+)(in) + 2 H(+)(out) = Na(+)(out) + 2 H(+)(in). Na(+)/H(+) antiporter that extrudes sodium in exchange for external protons. This is Na(+)/H(+) antiporter NhaA from Citrobacter koseri (strain ATCC BAA-895 / CDC 4225-83 / SGSC4696).